The chain runs to 507 residues: Peroxisomal catalase (507 aa).

Catalysis depends on residues histidine 65 and asparagine 138. Tyrosine 348 contributes to the heme binding site. Residues 505 to 507 (SKI) carry the Microbody targeting signal motif.

The protein belongs to the catalase family. As to quaternary structure, homotetramer. Heme is required as a cofactor.

It is found in the peroxisome matrix. The catalysed reaction is 2 H2O2 = O2 + 2 H2O. Functionally, catalyzes the degradation of hydrogen peroxide (H(2)O(2)) generated by peroxisomal oxidases to water and oxygen, thereby protecting cells from the toxic effects of hydrogen peroxide. The sequence is that of Peroxisomal catalase (PXP9) from Pichia angusta (Yeast).